Consider the following 405-residue polypeptide: Tryptophan synthase beta chain (405 aa).

Lysine 95 carries the N6-(pyridoxal phosphate)lysine modification.

It belongs to the TrpB family. Tetramer of two alpha and two beta chains. Requires pyridoxal 5'-phosphate as cofactor.

The catalysed reaction is (1S,2R)-1-C-(indol-3-yl)glycerol 3-phosphate + L-serine = D-glyceraldehyde 3-phosphate + L-tryptophan + H2O. The protein operates within amino-acid biosynthesis; L-tryptophan biosynthesis; L-tryptophan from chorismate: step 5/5. The beta subunit is responsible for the synthesis of L-tryptophan from indole and L-serine. This is Tryptophan synthase beta chain from Pseudomonas entomophila (strain L48).